The chain runs to 396 residues: Fumarate--(S)-2,3-diaminopropanoate ligase (396 aa).

It catalyses the reaction (S)-2,3-diaminopropanoate + fumarate + ATP = N(3)-fumaroyl-(S)-2,3-diaminopropanoate + AMP + diphosphate. The protein operates within antibiotic biosynthesis. Functionally, involved in dapdiamide antibiotics biosynthesis. Ligates fumarate and 2,3-diaminopropionate (DAP) to form N-beta-fumaroyl-DAP. Can also form N-succinoyl-DAP from succinate and DAP, with lower efficiency. This is Fumarate--(S)-2,3-diaminopropanoate ligase from Enterobacter agglomerans (Erwinia herbicola).